A 711-amino-acid polypeptide reads, in one-letter code: Double-stranded RNA-specific editase 1 (711 aa).

The disordered stretch occupies residues 1–78; that stretch reads MDIEDEENMS…KRRKTPGPVL (78 aa). The segment covering 63–73 has biased composition (basic residues); that stretch reads SKYRLKKRRKT. A DRBM 1 domain is found at 78 to 144; it reads LPKNALMQLN…AEKALRSFVQ (67 aa). Interaction with substrate RNA stretches follow at residues 83–88 and 104–105; these read LMQLNE and VH. Phosphoserine is present on S149. The tract at residues 176–220 is disordered; it reads LFNGFETPDKSEPPFYVGSNGDDSFSSSGDVSLSASPVPASLTQP. Residues 192–213 show a composition bias toward low complexity; sequence VGSNGDDSFSSSGDVSLSASPV. The region spanning 231 to 298 is the DRBM 2 domain; it reads PSGKNPVMIL…AQSALATVFN (68 aa). Interaction with substrate RNA regions lie at residues 237-242 and H259; that span reads VMILNE. The A to I editase domain maps to 370 to 707; the sequence is SVSTGTKCIN…VEKPTEQDQF (338 aa). H394 is a binding site for Zn(2+). The active-site Proton donor is the E396. The 1D-myo-inositol hexakisphosphate site is built by R400 and R401. Zn(2+) contacts are provided by C451 and C526. 6 residues coordinate 1D-myo-inositol hexakisphosphate: K529, R532, K639, K672, K682, and K700.

As to quaternary structure, homodimer. Homodimerization is essential for its catalytic activity. Can form heterodimers with isoform 5 of ADAR/ADAR1. 1D-myo-inositol hexakisphosphate serves as cofactor.

Its subcellular location is the nucleus. The protein resides in the nucleolus. The catalysed reaction is adenosine in double-stranded RNA + H2O + H(+) = inosine in double-stranded RNA + NH4(+). Catalyzes the hydrolytic deamination of adenosine to inosine in double-stranded RNA (dsRNA) referred to as A-to-I RNA editing. This may affect gene expression and function in a number of ways that include mRNA translation by changing codons and hence the amino acid sequence of proteins; pre-mRNA splicing by altering splice site recognition sequences; RNA stability by changing sequences involved in nuclease recognition; genetic stability in the case of RNA virus genomes by changing sequences during viral RNA replication; and RNA structure-dependent activities such as microRNA production or targeting or protein-RNA interactions. Can edit both viral and cellular RNAs and can edit RNAs at multiple sites (hyper-editing) or at specific sites (site-specific editing). Its cellular RNA substrates include: bladder cancer-associated protein (BLCAP), neurotransmitter receptors for glutamate (GRIA2 and GRIK2) and serotonin (HTR2C), GABA receptor (GABRA3) and potassium voltage-gated channel (KCNA1). Site-specific RNA editing of transcripts encoding these proteins results in amino acid substitutions which consequently alter their functional activities. Edits GRIA2 at both the Q/R and R/G sites efficiently but converts the adenosine in hotspot1 much less efficiently. Can inhibit cell proliferation and migration and can stimulate exocytosis. The polypeptide is Double-stranded RNA-specific editase 1 (Adarb1) (Mus musculus (Mouse)).